The following is a 179-amino-acid chain: Large ribosomal subunit protein bL27c (179 aa).

A chloroplast-targeting transit peptide spans 1–51 (MAVSFSLVGAFKGLSLASSSSFLKGDFGAAFPVAPKFSVSFPLKSPLTIES).

It belongs to the bacterial ribosomal protein bL27 family. Part of the 50S ribosomal subunit.

It localises to the plastid. The protein resides in the chloroplast. This chain is Large ribosomal subunit protein bL27c (RPL27), found in Nicotiana tabacum (Common tobacco).